The chain runs to 347 residues: Mitochondrial carrier protein rim2 (347 aa).

Solcar repeat units lie at residues 32–136, 146–234, and 256–345; these read PPPL…GKRI, ENSQ…FKHA, and LDWG…IMHF. 6 helical membrane-spanning segments follow: residues 38 to 58, 105 to 125, 152 to 172, 214 to 233, 262 to 282, and 317 to 338; these read FIAG…LDVV, TRAL…ARSI, LMAA…IWLV, SLLG…KFKH, LGGA…HEVV, and LYGG…LFGS.

It is found in the mitochondrion inner membrane. The catalysed reaction is 5-methyl-UTP(out) + UTP(in) = 5-methyl-UTP(in) + UTP(out). Its function is as follows. Mitochondrial transporter that imports/exports pyrimidine nucleotides into and from mitochondria. Selectively transports uridine, thymidine, and cytosine (deoxy)nucleoside di- and triphosphates by an antiport mechanism. Also transports, with lower efficiency, uridine, thymidine, and cytosine (deoxy)nucleoside monophosphates as well as guanosine (deoxy)nucleoside di- and triphosphate. May import (deoxy)nucleoside triphosphates in exchange for intramitochondrial (deoxy)nucleoside monophosphates, thus providing precursors necessary for de novo synthesis of mitochondrial DNA and RNA while exporting products of their catabolism. Mediates the transport of iron and other divalent metal ions like copper and zinc across the mitochondrial inner membrane in a pyrimidine nucleotide-dependent fashion. Catalyzes the co-import of pyrimidine nucleotides and divalent metal ions including ferrous iron. Participates in mitochondrial genome maintenance, regulation of mitochondrial membrane potential and mitochondrial respiration. This is Mitochondrial carrier protein rim2 (rim2) from Schizosaccharomyces pombe (strain 972 / ATCC 24843) (Fission yeast).